Here is a 374-residue protein sequence, read N- to C-terminus: GDSL esterase/lipase At3g50400 (374 aa).

The N-terminal stretch at 1–26 (MKKSIFFVPVLVLFFFGSRFSRVASA) is a signal peptide. Ser-41 acts as the Nucleophile in catalysis. N-linked (GlcNAc...) asparagine glycosylation is found at Asn-104 and Asn-125. Residues Asp-339 and His-342 contribute to the active site.

The protein belongs to the 'GDSL' lipolytic enzyme family.

Its subcellular location is the secreted. In Arabidopsis thaliana (Mouse-ear cress), this protein is GDSL esterase/lipase At3g50400.